We begin with the raw amino-acid sequence, 204 residues long: Holliday junction branch migration complex subunit RuvA (204 aa).

Positions 1–63 are domain I; the sequence is MIASLRGTVI…EDAMKLYGFI (63 aa). Residues 64–142 form a domain II region; sequence DDQSREMFAL…AYTVGVVDDG (79 aa). Positions 143-151 are flexible linker; that stretch reads APTAPTQGV. The interval 152–204 is domain III; it reads APVVVVDQVTQALTGLGFTEKQADDAVAAVLSADPGLDTSAALRAALAKLGGK.

Belongs to the RuvA family. As to quaternary structure, homotetramer. Forms an RuvA(8)-RuvB(12)-Holliday junction (HJ) complex. HJ DNA is sandwiched between 2 RuvA tetramers; dsDNA enters through RuvA and exits via RuvB. An RuvB hexamer assembles on each DNA strand where it exits the tetramer. Each RuvB hexamer is contacted by two RuvA subunits (via domain III) on 2 adjacent RuvB subunits; this complex drives branch migration. In the full resolvosome a probable DNA-RuvA(4)-RuvB(12)-RuvC(2) complex forms which resolves the HJ.

It localises to the cytoplasm. In terms of biological role, the RuvA-RuvB-RuvC complex processes Holliday junction (HJ) DNA during genetic recombination and DNA repair, while the RuvA-RuvB complex plays an important role in the rescue of blocked DNA replication forks via replication fork reversal (RFR). RuvA specifically binds to HJ cruciform DNA, conferring on it an open structure. The RuvB hexamer acts as an ATP-dependent pump, pulling dsDNA into and through the RuvAB complex. HJ branch migration allows RuvC to scan DNA until it finds its consensus sequence, where it cleaves and resolves the cruciform DNA. This chain is Holliday junction branch migration complex subunit RuvA, found in Corynebacterium efficiens (strain DSM 44549 / YS-314 / AJ 12310 / JCM 11189 / NBRC 100395).